A 288-amino-acid polypeptide reads, in one-letter code: N(1)-aminopropylagmatine ureohydrolase (288 aa).

Positions 114, 133, 135, 137, 213, and 215 each coordinate Mn(2+).

Belongs to the arginase family. It depends on Mn(2+) as a cofactor.

It is found in the cytoplasm. The enzyme catalyses N(1)-(3-aminopropyl)agmatine + H2O = urea + spermidine. The catalysed reaction is agmatine + H2O = urea + putrescine. The protein operates within amine and polyamine biosynthesis; spermidine biosynthesis. Its function is as follows. Involved in the biosynthesis of polyamines which are thought to support the growth of thermophilic microorganisms under high-temperature conditions. It seems that long-chain and branched-chain of polyamines effectively stabilize DNA and RNA, respectively. Catalyzes the decarboxylation of N1-(3-aminopropyl)agmatine to yield spermidine and urea. It can also use agmatine to yield putrescine. This chain is N(1)-aminopropylagmatine ureohydrolase, found in Thermococcus kodakarensis (strain ATCC BAA-918 / JCM 12380 / KOD1) (Pyrococcus kodakaraensis (strain KOD1)).